Here is a 310-residue protein sequence, read N- to C-terminus: Lipoyl synthase (310 aa).

[4Fe-4S] cluster contacts are provided by C41, C46, C52, C68, C72, C75, and S281. A Radical SAM core domain is found at 54–270 (GERRTATFMI…RKVAMEKGFK (217 aa)). Positions 285 to 310 (DEQVNEAAKERQRIGDEKLEAAKNEA) are disordered.

The protein belongs to the radical SAM superfamily. Lipoyl synthase family. [4Fe-4S] cluster is required as a cofactor.

The protein localises to the cytoplasm. It catalyses the reaction [[Fe-S] cluster scaffold protein carrying a second [4Fe-4S](2+) cluster] + N(6)-octanoyl-L-lysyl-[protein] + 2 oxidized [2Fe-2S]-[ferredoxin] + 2 S-adenosyl-L-methionine + 4 H(+) = [[Fe-S] cluster scaffold protein] + N(6)-[(R)-dihydrolipoyl]-L-lysyl-[protein] + 4 Fe(3+) + 2 hydrogen sulfide + 2 5'-deoxyadenosine + 2 L-methionine + 2 reduced [2Fe-2S]-[ferredoxin]. It participates in protein modification; protein lipoylation via endogenous pathway; protein N(6)-(lipoyl)lysine from octanoyl-[acyl-carrier-protein]. Catalyzes the radical-mediated insertion of two sulfur atoms into the C-6 and C-8 positions of the octanoyl moiety bound to the lipoyl domains of lipoate-dependent enzymes, thereby converting the octanoylated domains into lipoylated derivatives. In Staphylococcus carnosus (strain TM300), this protein is Lipoyl synthase.